The sequence spans 355 residues: Alpha-N-acetylneuraminide alpha-2,8-sialyltransferase (355 aa).

Over 1 to 28 (MSPCGRALHTSRGAMAMLARKFPRTRLP) the chain is Cytoplasmic. The helical; Signal-anchor for type II membrane protein transmembrane segment at 29-47 (VGASALCVVVLCWLYIFPV) threads the bilayer. The Lumenal segment spans residues 48–355 (YRLPNEKEIV…CEEPSPQPTS (308 aa)). N-linked (GlcNAc...) asparagine glycans are attached at residues asparagine 70 and asparagine 118. Disulfide bonds link cysteine 137-cysteine 286 and cysteine 151-cysteine 346. 2 residues coordinate CMP-N-acetyl-beta-neuraminate: asparagine 142 and asparagine 165. 2 N-linked (GlcNAc...) asparagine glycosylation sites follow: asparagine 213 and asparagine 244. CMP-N-acetyl-beta-neuraminate is bound by residues serine 273, threonine 274, glycine 275, tryptophan 295, and histidine 309. The Proton donor/acceptor role is filled by histidine 321.

It belongs to the glycosyltransferase 29 family.

The protein localises to the golgi apparatus membrane. It catalyses the reaction an N-acetyl-alpha-neuraminyl-(2-&gt;3)-beta-D-galactosyl derivative + CMP-N-acetyl-beta-neuraminate = an N-acetyl-alpha-neuraminyl-(2-&gt;8)-N-acetyl-alpha-neuraminyl-(2-&gt;3)-beta-D-galactosyl derivative + CMP + H(+). The enzyme catalyses a ganglioside GM3 (d18:1(4E)) + CMP-N-acetyl-beta-neuraminate = a ganglioside GD3 (d18:1(4E)) + CMP + H(+). It carries out the reaction a ganglioside GD3 (d18:1(4E)) + CMP-N-acetyl-beta-neuraminate = a ganglioside GT3 (d18:1(4E)) + CMP + H(+). The catalysed reaction is a ganglioside GD1a (d18:1(4E)) + CMP-N-acetyl-beta-neuraminate = a ganglioside GT1a (d18:1(4E)) + CMP + H(+). It catalyses the reaction a ganglioside GT1b (d18:1(4E)) + CMP-N-acetyl-beta-neuraminate = a ganglioside GQ1b (d18:1(4E)) + CMP + H(+). The enzyme catalyses a ganglioside GM1b (d18:1(4E)) + CMP-N-acetyl-beta-neuraminate = a ganglioside GD1c (d18:1(4E)) + CMP + H(+). It carries out the reaction a ganglioside GD3 + CMP-N-acetyl-beta-neuraminate = a ganglioside GT3 + CMP + H(+). The catalysed reaction is [alpha-N-acetylneuraminyl-(2-&gt;8)](n)-alpha-N-acetylneuraminyl-(2-&gt;8)-alpha-N-acetylneuraminyl-(2-&gt;3)-beta-D-galactosyl-(1-&gt;4)-beta-D-glucosyl-(1&lt;-&gt;1)-ceramide + CMP-N-acetyl-beta-neuraminate = [alpha-N-acetylneuraminyl-(2-&gt;8)](n+1)-alpha-N-acetylneuraminyl-(2-&gt;8)-alpha-N-acetylneuraminyl-(2-&gt;3)-beta-D-galactosyl-(1-&gt;4)-beta-D-glucosyl-(1&lt;-&gt;1)-ceramide + CMP + H(+). It participates in protein modification; protein glycosylation. The protein operates within lipid metabolism; sphingolipid metabolism. Catalyzes the addition of sialic acid in alpha 2,8-linkage to the sialic acid moiety of the ganglioside GM3 to form ganglioside GD3; gangliosides are a subfamily of complex glycosphingolipds that contain one or more residues of sialic acid. Can catalyze the addition of a second alpha-2,8- sialic acid to GD3 to form GT3. Can use GM1b, GD1a and GT1b as acceptor substrates to synthesize GD1c, GT1a and GQ1b respectively. The sequence is that of Alpha-N-acetylneuraminide alpha-2,8-sialyltransferase from Mus musculus (Mouse).